Reading from the N-terminus, the 201-residue chain is LexA repressor 1 (201 aa).

Residues Leu28–Glu48 constitute a DNA-binding region (H-T-H motif). Catalysis depends on for autocatalytic cleavage activity residues Ser120 and Lys157.

This sequence belongs to the peptidase S24 family. Homodimer.

It catalyses the reaction Hydrolysis of Ala-|-Gly bond in repressor LexA.. Its function is as follows. Represses a number of genes involved in the response to DNA damage (SOS response), including recA and lexA. In the presence of single-stranded DNA, RecA interacts with LexA causing an autocatalytic cleavage which disrupts the DNA-binding part of LexA, leading to derepression of the SOS regulon and eventually DNA repair. The sequence is that of LexA repressor 1 from Geobacter sulfurreducens (strain ATCC 51573 / DSM 12127 / PCA).